Consider the following 450-residue polypeptide: Bifunctional protein GlmU (450 aa).

The interval 1-236 (MTAHKPFSAV…AWEVSGVNNR (236 aa)) is pyrophosphorylase. Residues 12–15 (LAAG), Lys26, Gln79, 84–85 (GT), 107–109 (YGD), Gly147, Glu162, Asn177, and Asn234 each bind UDP-N-acetyl-alpha-D-glucosamine. Asp109 contacts Mg(2+). Asn234 lines the Mg(2+) pocket. The linker stretch occupies residues 237–257 (AELASLESLWQNRKRQDVMKD). The segment at 258-450 (GASLIAPETV…KKFRQRKKKK (193 aa)) is N-acetyltransferase. Positions 323 and 341 each coordinate UDP-N-acetyl-alpha-D-glucosamine. Catalysis depends on His353, which acts as the Proton acceptor. Residues Tyr356 and Asn367 each coordinate UDP-N-acetyl-alpha-D-glucosamine. Acetyl-CoA contacts are provided by residues 376 to 377 (NY), Ser395, Ala413, and Arg430.

It in the N-terminal section; belongs to the N-acetylglucosamine-1-phosphate uridyltransferase family. The protein in the C-terminal section; belongs to the transferase hexapeptide repeat family. In terms of assembly, homotrimer. Mg(2+) serves as cofactor.

Its subcellular location is the cytoplasm. It carries out the reaction alpha-D-glucosamine 1-phosphate + acetyl-CoA = N-acetyl-alpha-D-glucosamine 1-phosphate + CoA + H(+). It catalyses the reaction N-acetyl-alpha-D-glucosamine 1-phosphate + UTP + H(+) = UDP-N-acetyl-alpha-D-glucosamine + diphosphate. It functions in the pathway nucleotide-sugar biosynthesis; UDP-N-acetyl-alpha-D-glucosamine biosynthesis; N-acetyl-alpha-D-glucosamine 1-phosphate from alpha-D-glucosamine 6-phosphate (route II): step 2/2. Its pathway is nucleotide-sugar biosynthesis; UDP-N-acetyl-alpha-D-glucosamine biosynthesis; UDP-N-acetyl-alpha-D-glucosamine from N-acetyl-alpha-D-glucosamine 1-phosphate: step 1/1. The protein operates within bacterial outer membrane biogenesis; LPS lipid A biosynthesis. Catalyzes the last two sequential reactions in the de novo biosynthetic pathway for UDP-N-acetylglucosamine (UDP-GlcNAc). The C-terminal domain catalyzes the transfer of acetyl group from acetyl coenzyme A to glucosamine-1-phosphate (GlcN-1-P) to produce N-acetylglucosamine-1-phosphate (GlcNAc-1-P), which is converted into UDP-GlcNAc by the transfer of uridine 5-monophosphate (from uridine 5-triphosphate), a reaction catalyzed by the N-terminal domain. This chain is Bifunctional protein GlmU, found in Zymomonas mobilis subsp. mobilis (strain ATCC 31821 / ZM4 / CP4).